The following is a 140-amino-acid chain: Ribonuclease P protein component (140 aa).

The segment at 115–140 (RCKPGAPKPPPFKKRPNKSVKSNKQT) is disordered.

It belongs to the RnpA family. As to quaternary structure, consists of a catalytic RNA component (M1 or rnpB) and a protein subunit.

It catalyses the reaction Endonucleolytic cleavage of RNA, removing 5'-extranucleotides from tRNA precursor.. In terms of biological role, RNaseP catalyzes the removal of the 5'-leader sequence from pre-tRNA to produce the mature 5'-terminus. It can also cleave other RNA substrates such as 4.5S RNA. The protein component plays an auxiliary but essential role in vivo by binding to the 5'-leader sequence and broadening the substrate specificity of the ribozyme. This is Ribonuclease P protein component from Pseudoalteromonas translucida (strain TAC 125).